Reading from the N-terminus, the 490-residue chain is Cysteine--tRNA ligase (490 aa).

C31 is a binding site for Zn(2+). A 'HIGH' region motif is present at residues 33 to 43 (PTVYGDAHLGH). Zn(2+) is bound by residues C226, H251, and E255. A 'KMSKS' region motif is present at residues 283–287 (KMGKS). Residue K286 participates in ATP binding.

This sequence belongs to the class-I aminoacyl-tRNA synthetase family. In terms of assembly, monomer. The cofactor is Zn(2+).

It localises to the cytoplasm. The enzyme catalyses tRNA(Cys) + L-cysteine + ATP = L-cysteinyl-tRNA(Cys) + AMP + diphosphate. In Porphyromonas gingivalis (strain ATCC BAA-308 / W83), this protein is Cysteine--tRNA ligase.